The chain runs to 215 residues: 3,4-dihydroxy-2-butanone 4-phosphate synthase (215 aa).

D-ribulose 5-phosphate is bound by residues 38-39 (RE), Asp43, 151-155 (RRGHT), and Glu175. Position 39 (Glu39) interacts with Mg(2+). A Mg(2+)-binding site is contributed by His154.

The protein belongs to the DHBP synthase family. Homodimer. Mg(2+) serves as cofactor. Mn(2+) is required as a cofactor.

It carries out the reaction D-ribulose 5-phosphate = (2S)-2-hydroxy-3-oxobutyl phosphate + formate + H(+). The protein operates within cofactor biosynthesis; riboflavin biosynthesis; 2-hydroxy-3-oxobutyl phosphate from D-ribulose 5-phosphate: step 1/1. Catalyzes the conversion of D-ribulose 5-phosphate to formate and 3,4-dihydroxy-2-butanone 4-phosphate. This chain is 3,4-dihydroxy-2-butanone 4-phosphate synthase, found in Haemophilus influenzae (strain PittGG).